The following is a 130-amino-acid chain: Glycoprotein hormone alpha-2 (130 aa).

The signal sequence occupies residues 1 to 22 (MPMAPRVLLFCLLGLAVTEGHG). Intrachain disulfides connect cysteine 32/cysteine 90, cysteine 49/cysteine 104, cysteine 58/cysteine 120, and cysteine 62/cysteine 122. N-linked (GlcNAc...) asparagine glycans are attached at residues asparagine 38 and asparagine 82.

The protein belongs to the glycoprotein hormones subunit alpha family. Heterodimer with GPHB5; this heterodimer interacts with thyroid-stimulating hormone receptor (TSHR), and hence stimulates cAMP production.

Its subcellular location is the secreted. Functions as a heterodimeric glycoprotein hormone with GPHB5 able to bind and activate the thyroid-stimulating hormone receptor (TSHR), leading to increased cAMP production. Plays a central role in controlling thyroid cell metabolism. This chain is Glycoprotein hormone alpha-2 (Gpha2), found in Rattus norvegicus (Rat).